A 235-amino-acid polypeptide reads, in one-letter code: Ribonuclease 3 (235 aa).

An RNase III domain is found at leucine 7 to glycine 131. Glutamate 45 lines the Mg(2+) pocket. Aspartate 49 is an active-site residue. Residues aspartate 117 and glutamate 120 each coordinate Mg(2+). Glutamate 120 is an active-site residue. The DRBM domain maps to aspartate 156–isoleucine 225.

It belongs to the ribonuclease III family. In terms of assembly, homodimer. Mg(2+) serves as cofactor.

Its subcellular location is the cytoplasm. The catalysed reaction is Endonucleolytic cleavage to 5'-phosphomonoester.. In terms of biological role, digests double-stranded RNA. Involved in the processing of primary rRNA transcript to yield the immediate precursors to the large and small rRNAs (23S and 16S). Processes some mRNAs, and tRNAs when they are encoded in the rRNA operon. Processes pre-crRNA and tracrRNA of type II CRISPR loci if present in the organism. The chain is Ribonuclease 3 from Methylocella silvestris (strain DSM 15510 / CIP 108128 / LMG 27833 / NCIMB 13906 / BL2).